A 566-amino-acid polypeptide reads, in one-letter code: Transcription factor tasR (566 aa).

Over residues 1 to 30 (MISASRMEESASSSSLSDAAAPPPGAALQS) the composition is skewed to low complexity. Residues 1–31 (MISASRMEESASSSSLSDAAAPPPGAALQSI) form a disordered region. Residues 35–68 (CDRCRFHKLKCNVPAAGHGGPVPCERCTRAKVPC) constitute a DNA-binding region (zn(2)-C6 fungal-type). Disordered regions lie at residues 72–174 (RRRR…PGQH), 346–382 (EFIVTNNPQKHLGSESSSSSSSSISNSSSNNEAGGDD), 422–453 (SESDGCGRGASRSGPNASPALRLGELPSTGTA), and 500–551 (RGVG…GLGG). Low complexity-rich tracts occupy residues 89–108 (PTRRATMPSPSPTPASTSAA) and 359–378 (SESSSSSSSSISNSSSNNEA). Residues 501–532 (GVGGGGGGGGGGGGGGGGGVGGGGGGGGGPGG) show a composition bias toward gly residues.

The protein localises to the nucleus. In terms of biological role, transcription factor that regulates the expression of the gene cluster that mediates the biosynthesis of the tetramic acids Sch210971 and Sch210972, potential anti-HIV fungal natural product that contain a decalin core. This Hapsidospora irregularis protein is Transcription factor tasR.